Consider the following 191-residue polypeptide: ATP synthase subunit delta (191 aa).

This sequence belongs to the ATPase delta chain family. F-type ATPases have 2 components, F(1) - the catalytic core - and F(0) - the membrane proton channel. F(1) has five subunits: alpha(3), beta(3), gamma(1), delta(1), epsilon(1). F(0) has three main subunits: a(1), b(2) and c(10-14). The alpha and beta chains form an alternating ring which encloses part of the gamma chain. F(1) is attached to F(0) by a central stalk formed by the gamma and epsilon chains, while a peripheral stalk is formed by the delta and b chains.

The protein localises to the cell inner membrane. In terms of biological role, f(1)F(0) ATP synthase produces ATP from ADP in the presence of a proton or sodium gradient. F-type ATPases consist of two structural domains, F(1) containing the extramembraneous catalytic core and F(0) containing the membrane proton channel, linked together by a central stalk and a peripheral stalk. During catalysis, ATP synthesis in the catalytic domain of F(1) is coupled via a rotary mechanism of the central stalk subunits to proton translocation. Functionally, this protein is part of the stalk that links CF(0) to CF(1). It either transmits conformational changes from CF(0) to CF(1) or is implicated in proton conduction. The polypeptide is ATP synthase subunit delta (Halothermothrix orenii (strain H 168 / OCM 544 / DSM 9562)).